The following is a 220-amino-acid chain: Putative vesicle-associated membrane protein 726 (220 aa).

Residues 1-196 (MGQQSLIYSF…LWFENMKIKL (196 aa)) lie on the Cytoplasmic side of the membrane. One can recognise a Longin domain in the interval 10–114 (FVARGTVILA…SLNKEFGSKL (105 aa)). One can recognise a v-SNARE coiled-coil homology domain in the interval 130–190 (KLSKVKAQVT…TKMKRKLWFE (61 aa)). Residues 197 to 217 (IVFGIIVALILIIILSVCHGF) traverse the membrane as a helical; Anchor for type IV membrane protein segment. The Vesicular segment spans residues 218-220 (KCT).

This sequence belongs to the synaptobrevin family. As to expression, expressed in flowers, leaves, stems and roots.

Its subcellular location is the cell membrane. It is found in the early endosome membrane. In terms of biological role, involved in the targeting and/or fusion of transport vesicles to their target membrane. The chain is Putative vesicle-associated membrane protein 726 (VAMP726) from Arabidopsis thaliana (Mouse-ear cress).